The sequence spans 231 residues: Ribose-5-phosphate isomerase A (231 aa).

Substrate contacts are provided by residues 32–35, 85–88, and 98–101; these read TGST, DGAD, and KGGG. The Proton acceptor role is filled by glutamate 107. Lysine 125 contributes to the substrate binding site.

It belongs to the ribose 5-phosphate isomerase family. As to quaternary structure, homodimer.

The catalysed reaction is aldehydo-D-ribose 5-phosphate = D-ribulose 5-phosphate. Its pathway is carbohydrate degradation; pentose phosphate pathway; D-ribose 5-phosphate from D-ribulose 5-phosphate (non-oxidative stage): step 1/1. In terms of biological role, catalyzes the reversible conversion of ribose-5-phosphate to ribulose 5-phosphate. This chain is Ribose-5-phosphate isomerase A, found in Burkholderia mallei (strain NCTC 10247).